A 307-amino-acid chain; its full sequence is Elongation factor Ts (307 aa).

An involved in Mg(2+) ion dislocation from EF-Tu region spans residues 79 to 82 (TDFV).

This sequence belongs to the EF-Ts family.

The protein resides in the cytoplasm. Functionally, associates with the EF-Tu.GDP complex and induces the exchange of GDP to GTP. It remains bound to the aminoacyl-tRNA.EF-Tu.GTP complex up to the GTP hydrolysis stage on the ribosome. This chain is Elongation factor Ts, found in Sinorhizobium fredii (strain NBRC 101917 / NGR234).